The sequence spans 204 residues: Neurensin-2 (204 aa).

2 helical membrane passes run 66–86 and 122–142; these read LSSGTLLLLLGVAALTTGYAV and LCVAAGVLLAICLFWAMIGWL. A disordered region spans residues 178–204; the sequence is SGQSWFSPPASPFGQSSVQTIQPKRDS. Positions 190 to 204 are enriched in polar residues; it reads FGQSSVQTIQPKRDS.

Belongs to the VMP family.

Its subcellular location is the membrane. In terms of biological role, may play a role in maintenance and/or transport of vesicles. The sequence is that of Neurensin-2 (NRSN2) from Homo sapiens (Human).